The primary structure comprises 290 residues: Syntaxin (290 aa).

The tract at residues 1-22 (MTKDRLAALKAAQSDDDDNDDV) is disordered. Topologically, residues 1 to 267 (MTKDRLAALK…KYQSKARRKK (267 aa)) are cytoplasmic. Residues 32-114 (MEEFFEQVDE…EEHTNKSSAD (83 aa)) are a coiled coil. Residues 194–256 (LADIEARHND…ETAKMDTKKA (63 aa)) enclose the t-SNARE coiled-coil homology domain. Residues 268-288 (IMILVCLAILIIILVGVIGGT) traverse the membrane as a helical; Anchor for type IV membrane protein segment. The Extracellular portion of the chain corresponds to 289–290 (LG).

Belongs to the syntaxin family.

Its subcellular location is the membrane. Its function is as follows. Potentially involved in docking of synaptic vesicles at presynaptic active zones. This chain is Syntaxin, found in Aplysia californica (California sea hare).